The sequence spans 234 residues: Large ribosomal subunit protein uL1 (234 aa).

It belongs to the universal ribosomal protein uL1 family. In terms of assembly, part of the 50S ribosomal subunit.

In terms of biological role, binds directly to 23S rRNA. The L1 stalk is quite mobile in the ribosome, and is involved in E site tRNA release. Functionally, protein L1 is also a translational repressor protein, it controls the translation of the L11 operon by binding to its mRNA. The sequence is that of Large ribosomal subunit protein uL1 from Baumannia cicadellinicola subsp. Homalodisca coagulata.